Reading from the N-terminus, the 64-residue chain is Large ribosomal subunit protein bL35 (64 aa).

Residues 1–14 are compositionally biased toward basic residues; it reads MKQKTHKGTAKRVK. Residues 1 to 50 are disordered; it reads MKQKTHKGTAKRVKITGSGKLRREQANRRHLLEGKPSKRTRRLKGTEDVA. Over residues 21–36 the composition is skewed to basic and acidic residues; that stretch reads LRREQANRRHLLEGKP.

It belongs to the bacterial ribosomal protein bL35 family.

The sequence is that of Large ribosomal subunit protein bL35 from Corynebacterium diphtheriae (strain ATCC 700971 / NCTC 13129 / Biotype gravis).